A 175-amino-acid chain; its full sequence is Chromobox protein homolog hpl-2 (175 aa).

The region spanning 19-78 (FMVEKVLDKRTGKAGRDEFLIQWQGFPESDSSWEPRENLQCVEMLDEFEREFSKREKPIR) is the Chromo domain. Positions 71–109 (SKREKPIRKRHSQKPEPSEDQADPEEDKDEKKETNQNDK) are disordered. Residues 88–98 (SEDQADPEEDK) are compositionally biased toward acidic residues. A compositionally biased stretch (basic and acidic residues) spans 99–109 (DEKKETNQNDK). Positions 115-172 (KQLKCIVGLTKGPGELHFLCKFSDDTARLLPAKEVNSRYPSQVIRYYESKLTIQDPKA) constitute a Chromo 2; shadow subtype domain.

In terms of assembly, interacts with histone H3 when di-, or tri-methylated at 'Lys-27' (H3K27me2/me3), or tri-methylated at 'Lys-9' (H3K9me3). Interacts with Tar DNA-binding protein homolog tdp-1; interaction may maintain localization of hpl-2 to gene bodies. Interacts with histone H1 his-24, probably via interaction with hpl-1. Interacts with chromobox protein homolog hpl-1. May form homodimers. Interacts (via chromo (shadow subtype) domain) with zinc finger protein lin-13 (via PLVPV motif); the interaction is direct and influences localization of hpl-2 to nuclear foci.

The protein resides in the nucleus. It localises to the chromosome. In terms of biological role, seems to be involved in transcriptional silencing in heterochromatin-like complexes. Probably does not act as global transcriptional repressor, instead targeting a subset of genes. Involved in RNA processing mediated by Tar DNA-binding protein homolog tdp-1. Plays a role in linking epigenetic regulation with the innate immune response. Involved in the endoplasmic reticulum (ER) stress response via modulation of the unfolded protein response (UPR), acting mainly through the IRE1-XBP1 pathway and perhaps, to a lesser extent, through the autophagy pathway. May act in a common pathway with retinoblastoma-like protein homolog lin-35 and zinc finger protein lin-13 to influence the ER stress response in the intestine. Plays a role in the formation of the vulva and in fertility, acting together with a CoREST-like complex, and chromobox protein homolog hpl-1. Acting in concert with hpl-1 and histone H1 protein his-24, involved in reproduction, somatic gonad development, male tail development and vulval cell fate specification; perhaps as a result of modulating expression of Hox genes mab-5 and egl-5. In vulval cell fate specification may act by repressing transcription, of EGF family gene lin-3 in hypodermal hyp7, and of homeobox lin-39 in vulval precursor cells (VPC). Role in growth and somatic gonad development is antagonized by histone-lysine N-methyltransferase set-2/SET1. Required for larval development, acting redundantly with hpl-1. Plays a role in regulation of the developmentally arrested larval state known as dauer, longevity, and lipid metabolism. The chain is Chromobox protein homolog hpl-2 from Caenorhabditis elegans.